A 461-amino-acid chain; its full sequence is METLFNGTLALAGRDQETTGFAWWAGNARLINLSGKLLGAHVAHAGLIVFWAGAMNLFEVAHFVPEKPMYEQGLILLPHLATLGWGVGPGGEVIDTFPYFVSGVLHLISSAVLGFGGIYHALLGPETLEESFPFFGYVWKDRNKMTTILGIHLILLGLGAFLLVFKALYFGGVYDTWAPGGGDVRKITNLTLSPSIIFGYLLKSPFGGEGWIVSVDDLEDIIGGHVWLGSICILGGIWHILTKPFAWARRALVWSGEAYLSYSLGALSVFGFIACCFVWFNNTAYPSEFYGPTGPEASQAQAFTFLVRDQRLGANVGSAQGPTGLGKYLMRSPTGEVIFGGETMRFWDLRAPWLEPLRGPNGLDLSRLKKDIQPWQERRSAEYMTHAPLGSLNSVGGVATEINAVNYVSPRSWLATSHFVLGFFFFVGHLWHAGRARAAAAGFEKGIDRDFEPVLSMTPLN.

The propeptide occupies 1–2 (ME). At T3 the chain carries N-acetylthreonine. T3 is modified (phosphothreonine). The next 5 helical transmembrane spans lie at 57–81 (LFEVAHFVPEKPMYEQGLILLPHLA), 122–143 (LLGPETLEESFPFFGYVWKDRN), 166–188 (KALYFGGVYDTWAPGGGDVRKIT), 243–263 (KPFAWARRALVWSGEAYLSYS), and 279–300 (WFNNTAYPSEFYGPTGPEASQA). E355 contacts [CaMn4O5] cluster. A helical membrane pass occupies residues 435–459 (RARAAAAGFEKGIDRDFEPVLSMTP).

This sequence belongs to the PsbB/PsbC family. PsbC subfamily. In terms of assembly, PSII is composed of 1 copy each of membrane proteins PsbA, PsbB, PsbC, PsbD, PsbE, PsbF, PsbH, PsbI, PsbJ, PsbK, PsbL, PsbM, PsbT, PsbX, PsbY, PsbZ, Psb30/Ycf12, at least 3 peripheral proteins of the oxygen-evolving complex and a large number of cofactors. It forms dimeric complexes. It depends on Binds multiple chlorophylls and provides some of the ligands for the Ca-4Mn-5O cluster of the oxygen-evolving complex. It may also provide a ligand for a Cl- that is required for oxygen evolution. PSII binds additional chlorophylls, carotenoids and specific lipids. as a cofactor.

The protein localises to the plastid. It localises to the chloroplast thylakoid membrane. Its function is as follows. One of the components of the core complex of photosystem II (PSII). It binds chlorophyll and helps catalyze the primary light-induced photochemical processes of PSII. PSII is a light-driven water:plastoquinone oxidoreductase, using light energy to abstract electrons from H(2)O, generating O(2) and a proton gradient subsequently used for ATP formation. This is Photosystem II CP43 reaction center protein from Nicotiana sylvestris (Wood tobacco).